Consider the following 601-residue polypeptide: Sulfite reductase [NADPH] flavoprotein alpha-component (601 aa).

The Flavodoxin-like domain occupies 64-202; that stretch reads ITLISASQTG…AAQEWRARVV (139 aa). Residues 70-75, 117-120, and 153-162 contribute to the FMN site; these read SQTGNA, STQG, and LGDTSYEFFC. The FAD-binding FR-type domain occupies 236 to 450; the sequence is EAPLSASLAV…IEHNDNFRLP (215 aa). Residues T324, A358, 388–391, 406–408, Y412, and 421–424 each bind FAD; these read RLYS, TVG, and GGAS. NADP(+)-binding positions include 521–522, 527–531, and D563; these read SR and KIYVQ. Residue Y601 participates in FAD binding.

The protein belongs to the NADPH-dependent sulphite reductase flavoprotein subunit CysJ family. In the N-terminal section; belongs to the flavodoxin family. This sequence in the C-terminal section; belongs to the flavoprotein pyridine nucleotide cytochrome reductase family. Alpha(8)-beta(8). The alpha component is a flavoprotein, the beta component is a hemoprotein. Requires FAD as cofactor. It depends on FMN as a cofactor.

The enzyme catalyses hydrogen sulfide + 3 NADP(+) + 3 H2O = sulfite + 3 NADPH + 4 H(+). It functions in the pathway sulfur metabolism; hydrogen sulfide biosynthesis; hydrogen sulfide from sulfite (NADPH route): step 1/1. Component of the sulfite reductase complex that catalyzes the 6-electron reduction of sulfite to sulfide. This is one of several activities required for the biosynthesis of L-cysteine from sulfate. The flavoprotein component catalyzes the electron flow from NADPH -&gt; FAD -&gt; FMN to the hemoprotein component. In Citrobacter koseri (strain ATCC BAA-895 / CDC 4225-83 / SGSC4696), this protein is Sulfite reductase [NADPH] flavoprotein alpha-component.